Consider the following 149-residue polypeptide: MKSACKPHGPPAGARGAPPCAGAAERAVSCAGPGRLESAARRRLAANARERRRMQGLNTAFDRLRRVVPQWGQDKKLSKYETLQMALSYIIALTRILAEAERDWVGLRCEQRGRDHPYLPFPGARLQVDPEPYGQRLFGFQPEPFPMAS.

Positions 41-93 (RRRLAANARERRRMQGLNTAFDRLRRVVPQWGQDKKLSKYETLQMALSYIIAL) constitute a bHLH domain.

Forms a heterodimer with TCF3 isoform E47; interaction may be required for DNA-binding in certain situations. Expressed in retinal ganglion cells. Expressed in the cerebellum, trapezoid body, ventral nucleus of the lateral lamniscus and in areas of the auditory hindbrain such as the cochlear nucleus, lateral superior olive and medial nucleus of the trapezoid body. Expressed in the modiolar nerve root and in the cochlear in a small group of bushy neurons within the acoustic nerve. Expressed weakly in the sensory epithelia of the saccule and utricle.

Its subcellular location is the nucleus. It localises to the perikaryon. The protein localises to the cell projection. It is found in the axon. Its function is as follows. Transcription factor that binds to DNA at the consensus sequence 5'-CAG[GC]TG-3'. Dimerization with TCF3 isoform E47 may be required in certain situations. Binds to gene promoters and enhancer elements, and thereby regulates a transcriptional program of retinal ganglion cell (RGC) determinant genes. Although the exact mechanism is not certain, retinal transcription regulation by ATOH7 has a role in RGC determination and survival, photoreceptor population development, targeting of RGC axons to the optic nerve and development of the retino-hypothalamic tract. Binds to its own promoter and enhancer sequences, suggesting autoregulation of ATOH7 transcription. Required for retinal circadian rhythm photoentrainment. Plays a role in brainstem auditory signaling and binaural processing. The protein is Transcription factor Atoh7 of Mus musculus (Mouse).